The sequence spans 93 residues: SH3 domain-binding glutamic acid-rich-like protein 3 (93 aa).

An N-acetylserine modification is found at S2. The Glutaredoxin domain maps to 2–93 (SGLRVYSTSV…DTLQEFLKLA (92 aa)). T9 carries O-linked (GalNAc...) threonine glycosylation.

Belongs to the SH3BGR family. In terms of assembly, homodimer. Interacts with MYO1C (via its IQ motifs); the interaction is dependent on calcium and takes place at membrane ruffles. In terms of processing, may be glycosylated.

The protein resides in the cytoplasm. It localises to the cytosol. It is found in the cell projection. Its subcellular location is the ruffle membrane. The protein localises to the nucleus. Could act as a modulator of glutaredoxin biological activity. May play a role in cytoskeleton organization. The protein is SH3 domain-binding glutamic acid-rich-like protein 3 (Sh3bgrl3) of Mus musculus (Mouse).